We begin with the raw amino-acid sequence, 633 residues long: MNKKCTIIYATESGTSQEVAEKLSRDLVLYEIKPRLIDVTNYNKLELPMEKIVIFVLSTTGHGEVPDPMKPLWNFLLIKSLPSNSLANTKFAILGLGDSSYTTYNFAAKKLYQRLQSIGGTPLLRRGDADDQHDLGIDYEVEKWSQELISKLLTIYPLSPNFNINNIKNQLNKSKYNIKIDKINENNKEIKYEIPTQFYKSKLKVNKRITVEEWEQDVRHIELDISECKELQVPIKYQSGDVAYVLPKNPIKRVNEFIELLGLHSNWIIESIEPIDKEITQSPTLLKLPITIYDLVRCYFDIMGSPRRYFFELLSHFVTNPIEKERLEFFSSTEGQDDLRTYNQKEKRNYIDVLKEFPSIEIPFEYLFDLIPPIKPRPFSISSSSLLNPNTIHLTVGINTYTTPFRRLFRTGLCSQYFSSFLNDNDNNIVPIFIKESGARLPKSNEIPIIMVGPGTGCAIFRSFMQERLYFKNNSDNNNKLGDALFYFGCRSESKDYYYRDEFESNLEKGIISKLSVAFSRDGKDGKKVYVQQYIENDSDLIWDIINNRNGYFYISGSSGRMPKDVKQSLLTIIKSNLLKNNNNNNNNNNNNNNNNNNNNNNNNNDDENNIDEIVNNYFEKLEVEKRFITETW.

In terms of domain architecture, Flavodoxin-like spans 5–149 (CTIIYATESG…EVEKWSQELI (145 aa)). FMN is bound by residues 11-16 (TESGTS), 58-61 (STTG), and Asp-131. The FAD-binding FR-type domain occupies 196-442 (TQFYKSKLKV…FIKESGARLP (247 aa)). FAD contacts are provided by residues 377–380 (RPFS) and 412–415 (GLCS). NADP(+)-binding positions include Thr-456, 520–521 (SR), 528–532 (KVYVQ), and Asp-565. The disordered stretch occupies residues 580–610 (KNNNNNNNNNNNNNNNNNNNNNNNNNDDENN). A compositionally biased stretch (low complexity) spans 581-604 (NNNNNNNNNNNNNNNNNNNNNNNN). Trp-633 lines the FAD pocket.

The protein belongs to the NADPH-dependent diflavin oxidoreductase NDOR1 family. This sequence in the N-terminal section; belongs to the flavodoxin family. In the C-terminal section; belongs to the flavoprotein pyridine nucleotide cytochrome reductase family. Requires FAD as cofactor. It depends on FMN as a cofactor.

The protein resides in the cytoplasm. It carries out the reaction 2 oxidized [2Fe-2S]-[protein] + NADPH = 2 reduced [2Fe-2S]-[protein] + NADP(+) + H(+). Functionally, NADPH-dependent reductase which is a central component of the cytosolic iron-sulfur (Fe-S) protein assembly (CIA) machinery. Transfers electrons from NADPH via its FAD and FMN prosthetic groups to the [2Fe-2S] cluster of the anamorsin/DRE2 homolog, another key component of the CIA machinery. In turn, this reduced cluster provides electrons for assembly of cytosolic iron-sulfur cluster proteins. The sequence is that of NADPH-dependent diflavin oxidoreductase 1 (redC) from Dictyostelium discoideum (Social amoeba).